Consider the following 138-residue polypeptide: Cyclin-dependent kinase 4 inhibitor B (138 aa).

Residues 13 to 39 form an ANK 1; truncated repeat; the sequence is GSDEGLASAAARGLVEKVRQLLEAGAD. ANK repeat units follow at residues 46–74, 79–108, and 112–138; these read FGRR…EPNC, TLTR…RLDV, and WGRL…ATGD.

The protein belongs to the CDKN2 cyclin-dependent kinase inhibitor family. As to quaternary structure, heterodimer of CDKN2B with CDK4 or CDK6. Isoform 2 does not interact with CDK4 nor CDK6. As to expression, isoform 2 is expressed in normal (keratinocytes, fibroblasts) and tumor cell lines.

It is found in the cytoplasm. Its function is as follows. Interacts strongly with CDK4 and CDK6. Potent inhibitor. Potential effector of TGF-beta induced cell cycle arrest. This chain is Cyclin-dependent kinase 4 inhibitor B (CDKN2B), found in Homo sapiens (Human).